A 561-amino-acid chain; its full sequence is Carbohydrate sulfotransferase 15 (561 aa).

Topologically, residues 1-80 (MRHCINCCIQ…FLRFKKGKRC (80 aa)) are cytoplasmic. Residues 81–101 (SLVFGLIIMTLVMASYILSGA) traverse the membrane as a helical; Signal-anchor for type II membrane protein segment. Residues 102–561 (HQELLISSPF…ADEAFAWKTT (460 aa)) lie on the Lumenal side of the membrane. 263-267 (KCGTT) contributes to the 3'-phosphoadenylyl sulfate binding site. Residue asparagine 364 is glycosylated (N-linked (GlcNAc...) asparagine). Arginine 392 and serine 400 together coordinate 3'-phosphoadenylyl sulfate.

The protein belongs to the sulfotransferase 1 family. In terms of assembly, homodimer; disulfide-linked (Potential). The relevance of homodimerization is however unsure. May interact with phosphorylated proteins in resting B-cells, including HCK. A divalent metal cation serves as cofactor. Glutathione is required as a cofactor. Post-translationally, glycosylated. In terms of tissue distribution, expressed in B-cell-enriched tissues but not in fetal or adult thymus. Expressed in fetal and adult spleen, lymph node, tonsil, bone marrow and peripheral leukocytes. Not expressed in T-cells. In pro-B, pre-B, and mature B-cell lines, it colocalizes with RAG1.

The protein resides in the golgi apparatus membrane. The enzyme catalyses dermatan 4'-sulfate + n 3'-phosphoadenylyl sulfate = dermatan 4',6'-bissulfate + n adenosine 3',5'-bisphosphate + n H(+). It carries out the reaction chondroitin 4'-sulfate + n 3'-phosphoadenylyl sulfate = chondroitin 4',6'-bissulfate + n adenosine 3',5'-bisphosphate + n H(+). Its activity is regulated as follows. Inhibited by phenyl beta-GalNAc(4,6-SO(4)). In terms of biological role, sulfotransferase that transfers sulfate from 3'-phosphoadenosine 5'-phosphosulfate (PAPS) to the C-6 hydroxyl group of the GalNAc 4-sulfate residue of chondroitin sulfate A and forms chondroitin sulfate E containing GlcA-GalNAc(4,6-SO(4)) repeating units. It also transfers sulfate to a unique non-reducing terminal sequence, GalNAc(4SO4)-GlcA(2SO4)-GalNAc(6SO4), to yield a highly sulfated structure similar to the structure found in thrombomodulin chondroitin sulfate. May also act as a B-cell receptor involved in BCR ligation-mediated early activation that mediate regulatory signals key to B-cell development and/or regulation of B-cell-specific RAG expression; however such results are unclear in vivo. This Homo sapiens (Human) protein is Carbohydrate sulfotransferase 15 (CHST15).